Reading from the N-terminus, the 109-residue chain is Putative pterin-4-alpha-carbinolamine dehydratase (109 aa).

It belongs to the pterin-4-alpha-carbinolamine dehydratase family.

It carries out the reaction (4aS,6R)-4a-hydroxy-L-erythro-5,6,7,8-tetrahydrobiopterin = (6R)-L-erythro-6,7-dihydrobiopterin + H2O. In Vibrio cholerae serotype O1 (strain ATCC 39315 / El Tor Inaba N16961), this protein is Putative pterin-4-alpha-carbinolamine dehydratase.